Reading from the N-terminus, the 112-residue chain is High mobility group protein D (112 aa).

Positions 5–71 (PKRPLSAYML…DYDRAVKEFE (67 aa)) form a DNA-binding region, HMG box. Ser10 carries the phosphoserine modification. At Tyr12 the chain carries Phosphotyrosine. The disordered stretch occupies residues 72–112 (ANGGSSAANGGGAKKRAKPAKKVAKKSKKEESDEDDDDESE). Over residues 84-98 (AKKRAKPAKKVAKKS) the composition is skewed to basic residues. Phosphoserine occurs at positions 103 and 111. The segment covering 103 to 112 (SDEDDDDESE) has biased composition (acidic residues).

It belongs to the HMGB family.

It localises to the nucleus. Its subcellular location is the chromosome. In terms of biological role, binds preferentially single-stranded DNA and unwinds double-stranded DNA. Prefers sites containing the sequence 5'-ttg-3'. Facilitates DNA bending. Associated with early embryonic chromatin in the absence of histone H1. The sequence is that of High mobility group protein D (HmgD) from Drosophila melanogaster (Fruit fly).